A 530-amino-acid chain; its full sequence is Inactive ubiquitin carboxyl-terminal hydrolase 17-like protein 8 (530 aa).

The USP domain maps to 80 to 375; sequence AGLQNMGNTC…QAYVLFYIQK (296 aa). The segment covering 382–392 has biased composition (basic and acidic residues); the sequence is SESVSRGREPR. Disordered regions lie at residues 382-412 and 493-530; these read SESV…KRDH and NSTD…LVCQ. Over residues 495-510 the composition is skewed to polar residues; the sequence is TDQESMNTGTLASLQG. The span at 511 to 524 shows a compositional bias: basic residues; sequence RTRRSKGKNKHSKR.

The protein belongs to the peptidase C19 family. USP17 subfamily.

Its subcellular location is the nucleus. It is found in the endoplasmic reticulum. The chain is Inactive ubiquitin carboxyl-terminal hydrolase 17-like protein 8 (USP17L8) from Homo sapiens (Human).